The following is an 87-amino-acid chain: Mitochondrial import protein 2 (87 aa).

Residues 1-53 lie on the Cytoplasmic side of the membrane; the sequence is MADSEDTSVILQGIDTINSVEGLEEDGYLSDEDTSLSNELADAQRQWEESLQQ. A helical membrane pass occupies residues 54-71; that stretch reads LNKLLNWVLLPLLGKYIG. At 72 to 87 the chain is on the mitochondrial intermembrane side; it reads RRMAKTLWSRFIEHFV.

This sequence belongs to the MIM2 family. In terms of assembly, component of the MIM complex containing at least MIM1 and MIM2. Interacts with MIM1; interaction is direct.

The protein resides in the mitochondrion outer membrane. Functionally, component of the MIM complex required for outer membrane protein import. Involved in import of the subset of proteins with multiple alpha-helical transmembrane segments, including UGO1, TOM20 and FZO1. This chain is Mitochondrial import protein 2, found in Saccharomyces cerevisiae (strain ATCC 204508 / S288c) (Baker's yeast).